A 431-amino-acid polypeptide reads, in one-letter code: Glutamate-1-semialdehyde 2,1-aminomutase (431 aa).

Position 265 is an N6-(pyridoxal phosphate)lysine (Lys265).

This sequence belongs to the class-III pyridoxal-phosphate-dependent aminotransferase family. HemL subfamily. In terms of assembly, homodimer. Pyridoxal 5'-phosphate is required as a cofactor.

Its subcellular location is the cytoplasm. The catalysed reaction is (S)-4-amino-5-oxopentanoate = 5-aminolevulinate. It participates in porphyrin-containing compound metabolism; protoporphyrin-IX biosynthesis; 5-aminolevulinate from L-glutamyl-tRNA(Glu): step 2/2. In Vibrio campbellii (strain ATCC BAA-1116), this protein is Glutamate-1-semialdehyde 2,1-aminomutase.